The following is a 259-amino-acid chain: Imidazole glycerol phosphate synthase subunit HisF (259 aa).

Residues aspartate 11 and aspartate 130 contribute to the active site.

The protein belongs to the HisA/HisF family. In terms of assembly, heterodimer of HisH and HisF.

Its subcellular location is the cytoplasm. It carries out the reaction 5-[(5-phospho-1-deoxy-D-ribulos-1-ylimino)methylamino]-1-(5-phospho-beta-D-ribosyl)imidazole-4-carboxamide + L-glutamine = D-erythro-1-(imidazol-4-yl)glycerol 3-phosphate + 5-amino-1-(5-phospho-beta-D-ribosyl)imidazole-4-carboxamide + L-glutamate + H(+). Its pathway is amino-acid biosynthesis; L-histidine biosynthesis; L-histidine from 5-phospho-alpha-D-ribose 1-diphosphate: step 5/9. In terms of biological role, IGPS catalyzes the conversion of PRFAR and glutamine to IGP, AICAR and glutamate. The HisF subunit catalyzes the cyclization activity that produces IGP and AICAR from PRFAR using the ammonia provided by the HisH subunit. The polypeptide is Imidazole glycerol phosphate synthase subunit HisF (Carboxydothermus hydrogenoformans (strain ATCC BAA-161 / DSM 6008 / Z-2901)).